The primary structure comprises 105 residues: UPF0145 protein lpg0197 (105 aa).

The protein belongs to the UPF0145 family.

The chain is UPF0145 protein lpg0197 from Legionella pneumophila subsp. pneumophila (strain Philadelphia 1 / ATCC 33152 / DSM 7513).